The primary structure comprises 209 residues: Small ribosomal subunit protein uS3 (209 aa).

Residues I38–K107 form the KH type-2 domain.

This sequence belongs to the universal ribosomal protein uS3 family. Part of the 30S ribosomal subunit. Forms a tight complex with proteins S10 and S14.

Functionally, binds the lower part of the 30S subunit head. Binds mRNA in the 70S ribosome, positioning it for translation. This chain is Small ribosomal subunit protein uS3, found in Thermotoga maritima (strain ATCC 43589 / DSM 3109 / JCM 10099 / NBRC 100826 / MSB8).